We begin with the raw amino-acid sequence, 302 residues long: Probable lipid kinase YegS-like (302 aa).

The DAGKc domain occupies 1 to 129 (MDKDKVLLVL…IDLGEVNGKL (129 aa)). Residues Thr39, 65 to 71 (GDGTLRE), and Thr92 each bind ATP. Mg(2+)-binding residues include Arg210, Asp213, and Leu215. Glu268 acts as the Proton acceptor in catalysis.

It belongs to the diacylglycerol/lipid kinase family. YegS lipid kinase subfamily. Mg(2+) serves as cofactor. Ca(2+) is required as a cofactor.

The protein resides in the cytoplasm. In terms of biological role, probably phosphorylates lipids; the in vivo substrate is unknown. This is Probable lipid kinase YegS-like from Pseudomonas aeruginosa (strain ATCC 15692 / DSM 22644 / CIP 104116 / JCM 14847 / LMG 12228 / 1C / PRS 101 / PAO1).